The chain runs to 108 residues: UPF0060 membrane protein Sca_1835 (108 aa).

The next 4 membrane-spanning stretches (helical) occupy residues 5-25 (ILIF…IWLW), 34-54 (FGLL…FQVF), 60-80 (VYAA…YVFD), and 84-104 (PDKY…IMLL).

It belongs to the UPF0060 family.

Its subcellular location is the cell membrane. The chain is UPF0060 membrane protein Sca_1835 from Staphylococcus carnosus (strain TM300).